The following is a 212-amino-acid chain: MNTLAMDAEQLFLSKTIFEEEVFHEGFSLIAGIDEVGRGPLAGPVVAGACILPRGKVFAGVNDSKKLTPKERGKIRDILVNDSEVYYGLGVVSVERIDEINILEATKEAMAAAIANLPIHPDFLLVDGLHLPHKIPCKKIIKGDSKSASIAAASILAKEYRDDLMRELHQLYPDYGFDKHKGYGTAAHLAALKAFGPCDCHRKSFAPVRQVF.

The RNase H type-2 domain occupies 28–212 (SLIAGIDEVG…KSFAPVRQVF (185 aa)). A divalent metal cation contacts are provided by Asp34, Glu35, and Asp127.

The protein belongs to the RNase HII family. It depends on Mn(2+) as a cofactor. The cofactor is Mg(2+).

It localises to the cytoplasm. The enzyme catalyses Endonucleolytic cleavage to 5'-phosphomonoester.. Its function is as follows. Endonuclease that specifically degrades the RNA of RNA-DNA hybrids. The protein is Ribonuclease HII of Chlamydia abortus (strain DSM 27085 / S26/3) (Chlamydophila abortus).